Here is a 172-residue protein sequence, read N- to C-terminus: Translationally-controlled tumor protein (172 aa).

The region spanning 1 to 172 is the TCTP domain; it reads MIIYRDLISH…FKDGLEMEKC (172 aa). S46 is modified (phosphoserine; by PLK1). S53 is subject to Phosphoserine. Residue S64 is modified to Phosphoserine; by PLK1. The interval 70–172 is required for reduction of TSC22D1 protein stability; sequence VDIVMNHHLQ…FKDGLEMEKC (103 aa).

This sequence belongs to the TCTP family. Homodimer. Interacts with STEAP3. Interacts with TSC22D1; interaction results in the destabilization of TSC22D1 protein.

It is found in the cytoplasm. Involved in calcium binding and microtubule stabilization. Acts as a negative regulator of TSC22D1-mediated apoptosis, via interaction with and destabilization of TSC22D1 protein. The polypeptide is Translationally-controlled tumor protein (TPT1) (Bos taurus (Bovine)).